A 325-amino-acid chain; its full sequence is NADH-quinone oxidoreductase subunit H (325 aa).

8 consecutive transmembrane segments (helical) span residues 11–31 (ILLT…CGAF), 81–101 (VIFT…FAIV), 114–134 (IGIL…LFAG), 154–174 (LSYE…AGSF), 186–206 (VWNV…GVAV), 237–257 (FFVG…TLFF), 265–285 (LPPF…FILI), and 304–324 (ICLP…LWQA).

Belongs to the complex I subunit 1 family. In terms of assembly, NDH-1 is composed of 13 different subunits. Subunits NuoA, H, J, K, L, M, N constitute the membrane sector of the complex.

Its subcellular location is the cell inner membrane. The catalysed reaction is a quinone + NADH + 5 H(+)(in) = a quinol + NAD(+) + 4 H(+)(out). Its function is as follows. NDH-1 shuttles electrons from NADH, via FMN and iron-sulfur (Fe-S) centers, to quinones in the respiratory chain. The immediate electron acceptor for the enzyme in this species is believed to be ubiquinone. Couples the redox reaction to proton translocation (for every two electrons transferred, four hydrogen ions are translocated across the cytoplasmic membrane), and thus conserves the redox energy in a proton gradient. This subunit may bind ubiquinone. This is NADH-quinone oxidoreductase subunit H from Shigella flexneri serotype 5b (strain 8401).